Reading from the N-terminus, the 156-residue chain is Ribosomal RNA large subunit methyltransferase H (156 aa).

Residues Leu73, Gly104, and 123 to 128 each bind S-adenosyl-L-methionine; that span reads LSALTL.

Belongs to the RNA methyltransferase RlmH family. In terms of assembly, homodimer.

Its subcellular location is the cytoplasm. The enzyme catalyses pseudouridine(1915) in 23S rRNA + S-adenosyl-L-methionine = N(3)-methylpseudouridine(1915) in 23S rRNA + S-adenosyl-L-homocysteine + H(+). In terms of biological role, specifically methylates the pseudouridine at position 1915 (m3Psi1915) in 23S rRNA. The polypeptide is Ribosomal RNA large subunit methyltransferase H (Shewanella sp. (strain MR-7)).